Here is a 359-residue protein sequence, read N- to C-terminus: tRNA N6-adenosine threonylcarbamoyltransferase (359 aa).

His115 and His119 together coordinate Fe cation. Substrate-binding positions include 137-141 (LVSGG), Asp170, Gly183, and Asn283. Asp311 contacts Fe cation. The interval 328–359 (APDSLDIAPRSRWPLDEKSAPVFGTGRRGAKA) is disordered.

It belongs to the KAE1 / TsaD family. Fe(2+) is required as a cofactor.

It localises to the cytoplasm. The catalysed reaction is L-threonylcarbamoyladenylate + adenosine(37) in tRNA = N(6)-L-threonylcarbamoyladenosine(37) in tRNA + AMP + H(+). Functionally, required for the formation of a threonylcarbamoyl group on adenosine at position 37 (t(6)A37) in tRNAs that read codons beginning with adenine. Is involved in the transfer of the threonylcarbamoyl moiety of threonylcarbamoyl-AMP (TC-AMP) to the N6 group of A37, together with TsaE and TsaB. TsaD likely plays a direct catalytic role in this reaction. This Brucella suis (strain ATCC 23445 / NCTC 10510) protein is tRNA N6-adenosine threonylcarbamoyltransferase.